The chain runs to 344 residues: Mitochondrial substrate carrier family protein D (344 aa).

At Met1–Asp22 the chain is on the mitochondrial intermembrane side. Solcar repeat units lie at residues Asn17 to Tyr104, Ile119 to Lys212, and Val239 to Leu327. A helical transmembrane segment spans residues Phe23–Ile43. Residues Lys44–Gly75 are Mitochondrial matrix-facing. Residues Ile76–Ala96 traverse the membrane as a helical segment. Residues Thr97 to Asp116 are Mitochondrial intermembrane-facing. Residues Ile117–Leu137 traverse the membrane as a helical segment. Residues Leu138–Lys186 are Mitochondrial matrix-facing. Residues Gly187 to Glu207 form a helical membrane-spanning segment. Over Phe208–Gly238 the chain is Mitochondrial intermembrane. Residues Val239–Ile259 form a helical membrane-spanning segment. Topologically, residues Tyr260–Arg301 are mitochondrial matrix. A helical transmembrane segment spans residues Gly302–Tyr321. The Mitochondrial intermembrane portion of the chain corresponds to Glu322–Glu344.

Belongs to the mitochondrial carrier (TC 2.A.29) family.

Its subcellular location is the mitochondrion inner membrane. In terms of biological role, calcium-dependent mitochondrial solute carrier. Mitochondrial solute carriers shuttle metabolites, nucleotides, and cofactors through the mitochondrial inner membrane. The sequence is that of Mitochondrial substrate carrier family protein D (mcfD) from Dictyostelium discoideum (Social amoeba).